The primary structure comprises 87 residues: Neurotoxin Cex1 (87 aa).

The signal sequence occupies residues 1–19; the sequence is MNSLLMITTCLVLFGTVWA. The 66-residue stretch at 20-85 folds into the LCN-type CS-alpha/beta domain; it reads KEGYLVSKST…TYPIPGKSCG (66 aa). 4 disulfide bridges follow: C31/C84, C35/C60, C44/C65, and C48/C67. Cysteine amide is present on C84. Residues 85-87 constitute a propeptide that is removed on maturation; sequence GKK.

This sequence belongs to the long (4 C-C) scorpion toxin superfamily. Sodium channel inhibitor family. Beta subfamily. Expressed by the venom gland.

It is found in the secreted. Its function is as follows. Beta toxins bind voltage-independently at site-4 of sodium channels (Nav) and shift the voltage of activation toward more negative potentials thereby affecting sodium channel activation and promoting spontaneous and repetitive firing. This chain is Neurotoxin Cex1, found in Centruroides exilicauda (Bark scorpion).